A 259-amino-acid polypeptide reads, in one-letter code: Proteasome assembly chaperone 2 (259 aa).

This sequence belongs to the PSMG2 family. In terms of assembly, forms a heterodimer with psmg1. Degraded by the proteasome upon completion of 20S proteasome maturation.

The protein resides in the nucleus. Chaperone protein which promotes assembly of the 20S proteasome as part of a heterodimer with psmg1. The sequence is that of Proteasome assembly chaperone 2 from Xenopus laevis (African clawed frog).